A 391-amino-acid polypeptide reads, in one-letter code: Probable sugar efflux transporter (391 aa).

The next 12 helical transmembrane spans lie at 16–36 (VFVFSLSAFIFNTTEFVPVAL), 51–71 (VGLMITAYAWVVSLGSLPLML), 82–102 (LLFLFALFILSHILSALAWNF), 110–130 (MGIAFTHSIFWSITASLVIRV), 138–158 (QALGLLALGSSLAMILGLPLG), 170–190 (TFGVIGGVATLIALLMWKLLP), 210–230 (PLLMGIYLLVIMVISGHFTTY), 247–267 (ITTLMLFVFGLAGVAGSFLFS), 277–297 (FIAFAMVLVICPQLLLFVFKN), 300–320 (WVIFLQIFLWGIGITSLTIAL), 338–358 (IFSGSYNVGIGSGALFGSIVI), and 361–381 (LGLEYIGFVGGALGLLALFWL).

The protein belongs to the major facilitator superfamily. SotB (TC 2.A.1.2) family.

It localises to the cell inner membrane. In terms of biological role, involved in the efflux of sugars. The physiological role may be the reduction of the intracellular concentration of toxic sugars or sugar metabolites. The polypeptide is Probable sugar efflux transporter (Helicobacter pylori (strain HPAG1)).